Here is a 161-residue protein sequence, read N- to C-terminus: MADESGYDAGSDAGSDASLPSSEISFVEVKKPCEVCGSNANDHAIMTCFLCRDTREHIYCARVHLRSVPRMWICEECRMNPVVVNNVAPVDQEAAASSSRITYQVADSEVVNQTMTSSDSGNQISATHQQPPQAHASPVAVPMDTSSSDNQQPPSDSESAI.

The PHD-type zinc-finger motif lies at 30–80 (KKPCEVCGSNANDHAIMTCFLCRDTREHIYCARVHLRSVPRMWICEECRMN). The Zn(2+) site is built by Cys33, Cys36, Cys48, Cys51, His57, Cys60, Cys74, and Cys77. Residues 114–132 (TMTSSDSGNQISATHQQPP) show a composition bias toward polar residues. A disordered region spans residues 114-161 (TMTSSDSGNQISATHQQPPQAHASPVAVPMDTSSSDNQQPPSDSESAI). Positions 146 to 161 (SSSDNQQPPSDSESAI) are enriched in low complexity.

In terms of assembly, interacts directly with AIPP3/BDT1.

Functionally, together with AIPP3/BDT1, cooperates to form a BAH-PHD bivalent histone reader complex able to read histone H3 lysine 27 trimethylation (H3K27me3) histone marks in order to regulate transcription, especially to prevent early flowering; promotes AIPP3/BDT1 binding to H3K27me3. The polypeptide is PHD finger-containing protein 4 (Arabidopsis thaliana (Mouse-ear cress)).